We begin with the raw amino-acid sequence, 581 residues long: ATP-dependent lipid A-core flippase (581 aa).

The next 5 helical transmembrane spans lie at 15–35 (LWPIVSPFRIGLIVAAVALIL), 68–88 (LIVIALMIMRGLSGFVSSYCI), 152–172 (IIGLFVLMFYYSWQLSLILIV), 252–272 (PIIQLIASFALAFVLYAASFP), and 274–294 (IMETLTAGKITVVFSSMIALM). An ABC transmembrane type-1 domain is found at 27-309 (IVAAVALILN…LTNVNAQFQR (283 aa)). The 237-residue stretch at 341–577 (IEFRNVTFCY…NGVYSQLHRM (237 aa)) folds into the ABC transporter domain. 375-382 (GRSGSGKS) contacts ATP.

The protein belongs to the ABC transporter superfamily. Lipid exporter (TC 3.A.1.106) family. In terms of assembly, homodimer.

It localises to the cell inner membrane. It carries out the reaction ATP + H2O + lipid A-core oligosaccharideSide 1 = ADP + phosphate + lipid A-core oligosaccharideSide 2.. Its function is as follows. Involved in lipopolysaccharide (LPS) biosynthesis. Translocates lipid A-core from the inner to the outer leaflet of the inner membrane. Transmembrane domains (TMD) form a pore in the inner membrane and the ATP-binding domain (NBD) is responsible for energy generation. The sequence is that of ATP-dependent lipid A-core flippase from Photorhabdus laumondii subsp. laumondii (strain DSM 15139 / CIP 105565 / TT01) (Photorhabdus luminescens subsp. laumondii).